The primary structure comprises 116 residues: Large ribosomal subunit protein P2 (116 aa).

The interval 60–116 (GKLSSMPSGGGVAAAAGGGGAAAGGGGAAPAAEEKKEEKKEESEEESDDDMGFGLFD) is disordered. Positions 67–87 (SGGGVAAAAGGGGAAAGGGGA) are enriched in gly residues. Over residues 91 to 101 (AEEKKEEKKEE) the composition is skewed to basic and acidic residues.

This sequence belongs to the eukaryotic ribosomal protein P1/P2 family. As to quaternary structure, P1 and P2 exist as dimers at the large ribosomal subunit. In terms of processing, phosphorylated.

Functionally, plays an important role in the elongation step of protein synthesis. The sequence is that of Large ribosomal subunit protein P2 from Branchiostoma floridae (Florida lancelet).